We begin with the raw amino-acid sequence, 232 residues long: Ras association domain-containing protein 3 (232 aa).

S2 carries the post-translational modification N-acetylserine. A disordered region spans residues 25-46 (RAPPGKSRSGQPDVEKEKETHN). Basic and acidic residues predominate over residues 37 to 46 (DVEKEKETHN). The region spanning 78-180 (YTGFIKVQME…TLSFVLREHE (103 aa)) is the Ras-associating domain. One can recognise an SARAH domain in the interval 181–228 (IGEWEAFSLPELQNFLRILDKEEDEQLQSLKRRYTAYRQKLEEALGEV).

It is found in the cytoplasm. It localises to the cytoskeleton. This Mus musculus (Mouse) protein is Ras association domain-containing protein 3 (Rassf3).